The sequence spans 116 residues: Aspartate 1-decarboxylase (116 aa).

Serine 25 acts as the Schiff-base intermediate with substrate; via pyruvic acid in catalysis. Residue serine 25 is modified to Pyruvic acid (Ser). Residue threonine 57 participates in substrate binding. Tyrosine 58 (proton donor) is an active-site residue. 73–75 is a binding site for substrate; sequence GAA.

Belongs to the PanD family. In terms of assembly, heterooctamer of four alpha and four beta subunits. Pyruvate serves as cofactor. Is synthesized initially as an inactive proenzyme, which is activated by self-cleavage at a specific serine bond to produce a beta-subunit with a hydroxyl group at its C-terminus and an alpha-subunit with a pyruvoyl group at its N-terminus.

It localises to the cytoplasm. The catalysed reaction is L-aspartate + H(+) = beta-alanine + CO2. It participates in cofactor biosynthesis; (R)-pantothenate biosynthesis; beta-alanine from L-aspartate: step 1/1. Its function is as follows. Catalyzes the pyruvoyl-dependent decarboxylation of aspartate to produce beta-alanine. This Syntrophus aciditrophicus (strain SB) protein is Aspartate 1-decarboxylase.